The primary structure comprises 37 residues: Cytochrome b6-f complex subunit 5 (37 aa).

A helical transmembrane segment spans residues 5–25 (FLFGIVLGLIPITLAGLFVTA).

The protein belongs to the PetG family. The 4 large subunits of the cytochrome b6-f complex are cytochrome b6, subunit IV (17 kDa polypeptide, PetD), cytochrome f and the Rieske protein, while the 4 small subunits are PetG, PetL, PetM and PetN. The complex functions as a dimer.

Its subcellular location is the plastid. The protein resides in the chloroplast thylakoid membrane. Component of the cytochrome b6-f complex, which mediates electron transfer between photosystem II (PSII) and photosystem I (PSI), cyclic electron flow around PSI, and state transitions. PetG is required for either the stability or assembly of the cytochrome b6-f complex. The chain is Cytochrome b6-f complex subunit 5 from Solanum lycopersicum (Tomato).